A 439-amino-acid chain; its full sequence is Trigger factor (439 aa).

A PPIase FKBP-type domain is found at 175–260 (GDRVTISYRS…VERLSVKDEI (86 aa)).

This sequence belongs to the FKBP-type PPIase family. Tig subfamily.

Its subcellular location is the cytoplasm. The enzyme catalyses [protein]-peptidylproline (omega=180) = [protein]-peptidylproline (omega=0). Functionally, involved in protein export. Acts as a chaperone by maintaining the newly synthesized protein in an open conformation. Functions as a peptidyl-prolyl cis-trans isomerase. In Anaplasma phagocytophilum (strain HZ), this protein is Trigger factor.